The sequence spans 386 residues: 26S proteasome non-ATPase regulatory subunit 13 homolog B (386 aa).

At A2 the chain carries N-acetylalanine. The PCI domain occupies 174-347; sequence FSEFYKNALL…GTVYVSWAQP (174 aa).

This sequence belongs to the proteasome subunit S11 family. Component of the 19S regulatory particle (RP/PA700) lid subcomplex of the 26S proteasome. The 26S proteasome is composed of a core protease (CP), known as the 20S proteasome, capped at one or both ends by the 19S regulatory particle (RP/PA700). The RP/PA700 complex is composed of at least 17 different subunits in two subcomplexes, the base and the lid, which form the portions proximal and distal to the 20S proteolytic core, respectively. As to expression, ubiquitous with highest expression in flowers.

Acts as a regulatory subunit of the 26S proteasome which is involved in the ATP-dependent degradation of ubiquitinated proteins. This chain is 26S proteasome non-ATPase regulatory subunit 13 homolog B (RPN9B), found in Arabidopsis thaliana (Mouse-ear cress).